The primary structure comprises 256 residues: Indole-3-glycerol phosphate synthase (256 aa).

The protein belongs to the TrpC family.

It carries out the reaction 1-(2-carboxyphenylamino)-1-deoxy-D-ribulose 5-phosphate + H(+) = (1S,2R)-1-C-(indol-3-yl)glycerol 3-phosphate + CO2 + H2O. Its pathway is amino-acid biosynthesis; L-tryptophan biosynthesis; L-tryptophan from chorismate: step 4/5. In Chlorobaculum tepidum (strain ATCC 49652 / DSM 12025 / NBRC 103806 / TLS) (Chlorobium tepidum), this protein is Indole-3-glycerol phosphate synthase.